Consider the following 959-residue polypeptide: Protein SEY1 homolog 1 (959 aa).

Over 1-767 the chain is Cytoplasmic; it reads MQESDVFHNQ…ELAAITVHSK (767 aa). Residues 9–86 are a coiled coil; that stretch reads NQLRVEMLKK…EEEKKEKENY (78 aa). The disordered stretch occupies residues 62–81; it reads EEKENMKVEEEEIKEEEEKK. A GB1/RHD3-type G domain is found at 123–340; sequence GFNYNMLSIL…NQNTYFRPIY (218 aa). 133–140 is a GTP binding site; it reads GPQNSGKS. A helical transmembrane segment spans residues 768-788; the sequence is TPMWLILLIAFLSFDNIVYVF. The Lumenal portion of the chain corresponds to 789–791; that stretch reads KSP. A helical transmembrane segment spans residues 792 to 812; the sequence is TLLALTLIIIGIIYSLNKIGY. The Cytoplasmic portion of the chain corresponds to 813 to 959; that stretch reads AYLIDSVISY…LNKIKEANEF (147 aa). Residues 849–868 are disordered; that stretch reads EAPKRKRPQKKTQDDKPKSS.

This sequence belongs to the TRAFAC class dynamin-like GTPase superfamily. GB1/RHD3 GTPase family. RHD3 subfamily.

The protein localises to the endoplasmic reticulum membrane. Functionally, probable GTP-binding protein that may be involved in cell development. The sequence is that of Protein SEY1 homolog 1 from Entamoeba histolytica (strain ATCC 30459 / HM-1:IMSS / ABRM).